The sequence spans 171 residues: Sec-independent protein translocase protein TatB (171 aa).

Residues 1 to 21 form a helical membrane-spanning segment; it reads MFDIGFSELLLVFIIGLVVLG. The tract at residues 117-171 is disordered; sequence KDNETAHEGVTPAAAQTQASSPEQKPETTPEPVVKPAADAEPKTAAPSPSSSDKP. Positions 130 to 139 are enriched in polar residues; it reads AAQTQASSPE.

It belongs to the TatB family. As to quaternary structure, the Tat system comprises two distinct complexes: a TatABC complex, containing multiple copies of TatA, TatB and TatC subunits, and a separate TatA complex, containing only TatA subunits. Substrates initially bind to the TatABC complex, which probably triggers association of the separate TatA complex to form the active translocon.

The protein resides in the cell inner membrane. Part of the twin-arginine translocation (Tat) system that transports large folded proteins containing a characteristic twin-arginine motif in their signal peptide across membranes. Together with TatC, TatB is part of a receptor directly interacting with Tat signal peptides. TatB may form an oligomeric binding site that transiently accommodates folded Tat precursor proteins before their translocation. The chain is Sec-independent protein translocase protein TatB from Escherichia coli O6:K15:H31 (strain 536 / UPEC).